A 234-amino-acid chain; its full sequence is Leucyl/phenylalanyl-tRNA--protein transferase (234 aa).

Belongs to the L/F-transferase family.

Its subcellular location is the cytoplasm. It carries out the reaction N-terminal L-lysyl-[protein] + L-leucyl-tRNA(Leu) = N-terminal L-leucyl-L-lysyl-[protein] + tRNA(Leu) + H(+). The catalysed reaction is N-terminal L-arginyl-[protein] + L-leucyl-tRNA(Leu) = N-terminal L-leucyl-L-arginyl-[protein] + tRNA(Leu) + H(+). It catalyses the reaction L-phenylalanyl-tRNA(Phe) + an N-terminal L-alpha-aminoacyl-[protein] = an N-terminal L-phenylalanyl-L-alpha-aminoacyl-[protein] + tRNA(Phe). Functionally, functions in the N-end rule pathway of protein degradation where it conjugates Leu, Phe and, less efficiently, Met from aminoacyl-tRNAs to the N-termini of proteins containing an N-terminal arginine or lysine. The protein is Leucyl/phenylalanyl-tRNA--protein transferase of Dechloromonas aromatica (strain RCB).